A 142-amino-acid chain; its full sequence is Hemoglobin subunit theta-1 (142 aa).

The 141-residue stretch at 2–142 (ALSAEDRALV…VISALASEYR (141 aa)) folds into the Globin domain. The heme b site is built by H59 and H88.

This sequence belongs to the globin family.

The protein is Hemoglobin subunit theta-1 (HBQ1) of Pongo pygmaeus (Bornean orangutan).